The chain runs to 472 residues: Uronate isomerase (472 aa).

It belongs to the metallo-dependent hydrolases superfamily. Uronate isomerase family.

It catalyses the reaction D-glucuronate = D-fructuronate. The enzyme catalyses aldehydo-D-galacturonate = keto-D-tagaturonate. Its pathway is carbohydrate metabolism; pentose and glucuronate interconversion. The sequence is that of Uronate isomerase from Opitutus terrae (strain DSM 11246 / JCM 15787 / PB90-1).